The primary structure comprises 324 residues: Pepsin-2B (324 aa).

Positions Tyr14–Ala321 constitute a Peptidase A1 domain. The active site involves Asp32. The cysteines at positions 45 and 50 are disulfide-linked. The interval Gln86 to Gly109 is disordered. A compositionally biased stretch (polar residues) spans Asp96–Glu107. A disulfide bond links Cys206 and Cys209. Residue Asp214 is part of the active site. A disulfide bridge connects residues Cys247 and Cys280.

Belongs to the peptidase A1 family.

This chain is Pepsin-2B, found in Gadus morhua (Atlantic cod).